The primary structure comprises 251 residues: CDP-diacylglycerol pyrophosphatase (251 aa).

Residues 4–24 (AGLLFLVMIVIAVVAAGIGYW) form a helical membrane-spanning segment.

This sequence belongs to the Cdh family.

It localises to the cell inner membrane. The catalysed reaction is a CDP-1,2-diacyl-sn-glycerol + H2O = a 1,2-diacyl-sn-glycero-3-phosphate + CMP + 2 H(+). It participates in phospholipid metabolism; CDP-diacylglycerol degradation; phosphatidate from CDP-diacylglycerol: step 1/1. The chain is CDP-diacylglycerol pyrophosphatase from Escherichia coli (strain ATCC 8739 / DSM 1576 / NBRC 3972 / NCIMB 8545 / WDCM 00012 / Crooks).